Here is a 461-residue protein sequence, read N- to C-terminus: Bifunctional protein GlmU (461 aa).

The segment at M1–R232 is pyrophosphorylase. UDP-N-acetyl-alpha-D-glucosamine contacts are provided by residues L8–G11, K22, Q73, and G78–T79. D102 lines the Mg(2+) pocket. Residues G142, E157, and N230 each coordinate UDP-N-acetyl-alpha-D-glucosamine. A Mg(2+)-binding site is contributed by N230. The linker stretch occupies residues Q233–K253. Positions G254 to D461 are N-acetyltransferase. R336 and K354 together coordinate UDP-N-acetyl-alpha-D-glucosamine. Residue H366 is the Proton acceptor of the active site. Residues Y369 and N380 each coordinate UDP-N-acetyl-alpha-D-glucosamine. Acetyl-CoA is bound by residues A383, N389–Y390, S408, and A426.

It in the N-terminal section; belongs to the N-acetylglucosamine-1-phosphate uridyltransferase family. The protein in the C-terminal section; belongs to the transferase hexapeptide repeat family. As to quaternary structure, homotrimer. The cofactor is Mg(2+).

It localises to the cytoplasm. The catalysed reaction is alpha-D-glucosamine 1-phosphate + acetyl-CoA = N-acetyl-alpha-D-glucosamine 1-phosphate + CoA + H(+). The enzyme catalyses N-acetyl-alpha-D-glucosamine 1-phosphate + UTP + H(+) = UDP-N-acetyl-alpha-D-glucosamine + diphosphate. It participates in nucleotide-sugar biosynthesis; UDP-N-acetyl-alpha-D-glucosamine biosynthesis; N-acetyl-alpha-D-glucosamine 1-phosphate from alpha-D-glucosamine 6-phosphate (route II): step 2/2. The protein operates within nucleotide-sugar biosynthesis; UDP-N-acetyl-alpha-D-glucosamine biosynthesis; UDP-N-acetyl-alpha-D-glucosamine from N-acetyl-alpha-D-glucosamine 1-phosphate: step 1/1. It functions in the pathway bacterial outer membrane biogenesis; LPS lipid A biosynthesis. Functionally, catalyzes the last two sequential reactions in the de novo biosynthetic pathway for UDP-N-acetylglucosamine (UDP-GlcNAc). The C-terminal domain catalyzes the transfer of acetyl group from acetyl coenzyme A to glucosamine-1-phosphate (GlcN-1-P) to produce N-acetylglucosamine-1-phosphate (GlcNAc-1-P), which is converted into UDP-GlcNAc by the transfer of uridine 5-monophosphate (from uridine 5-triphosphate), a reaction catalyzed by the N-terminal domain. In Legionella pneumophila (strain Lens), this protein is Bifunctional protein GlmU.